A 471-amino-acid chain; its full sequence is Anthocyanidin 3-O-glucosyltransferase (471 aa).

The active-site Proton acceptor is the H24. H24 is an an anthocyanidin binding site. D130 functions as the Charge relay in the catalytic mechanism. T152 serves as a coordination point for UDP-alpha-D-glucose. H161 contacts an anthocyanidin. A352, Q354, H369, W372, S374, and E377 together coordinate UDP-alpha-D-glucose. Residue G392 coordinates an anthocyanidin. Residues D393 and Q394 each coordinate UDP-alpha-D-glucose.

Belongs to the UDP-glycosyltransferase family.

The enzyme catalyses an anthocyanidin + UDP-alpha-D-glucose + H(+) = an anthocyanidin 3-O-beta-D-glucoside + UDP. It functions in the pathway pigment biosynthesis; anthocyanin biosynthesis. Its function is as follows. In the presence of other necessary color factors, this glycosylation reaction allows the accumulation of anthocyanin pigments. This is Anthocyanidin 3-O-glucosyltransferase (BZ1) from Zea mays (Maize).